The sequence spans 30 residues: Cyclotide hyen-K (30 aa).

The segment at residues 1–30 (GIPCGESCIFIPCITTVVGCSCSNKVCYDN) is a cross-link (cyclopeptide (Gly-Asn)). 3 disulfides stabilise this stretch: Cys4–Cys20, Cys8–Cys22, and Cys13–Cys27.

This is a cyclic peptide. As to expression, detected in seeds (at protein level).

Functionally, probably participates in a plant defense mechanism. The chain is Cyclotide hyen-K from Pigea enneasperma (Spade flower).